The chain runs to 567 residues: Type 2 DNA topoisomerase 6 subunit B (567 aa).

ATP contacts are provided by residues asparagine 46, aspartate 78, 99–100, 109–116, and lysine 472; these read TK and GQQGIGIS.

It belongs to the TOP6B family. In terms of assembly, homodimer. Heterotetramer of two Top6A and two Top6B chains.

The enzyme catalyses ATP-dependent breakage, passage and rejoining of double-stranded DNA.. Its function is as follows. Relaxes both positive and negative superturns and exhibits a strong decatenase activity. The polypeptide is Type 2 DNA topoisomerase 6 subunit B (Thermococcus kodakarensis (strain ATCC BAA-918 / JCM 12380 / KOD1) (Pyrococcus kodakaraensis (strain KOD1))).